The chain runs to 194 residues: Adenylate kinase (194 aa).

10–15 (GAGKGT) lines the ATP pocket. The tract at residues 30–59 (STGDMLRAAVAQQSEIGKRAKAVMDAGQLV) is NMP. AMP is bound by residues T31, R36, 57–59 (QLV), 85–88 (GYPR), and Q92. An LID region spans residues 126-142 (SRVAETIAKGGQVRSDD). R127 provides a ligand contact to ATP. AMP contacts are provided by R139 and R150. A178 provides a ligand contact to ATP.

The protein belongs to the adenylate kinase family. As to quaternary structure, monomer.

It localises to the cytoplasm. The catalysed reaction is AMP + ATP = 2 ADP. It participates in purine metabolism; AMP biosynthesis via salvage pathway; AMP from ADP: step 1/1. Catalyzes the reversible transfer of the terminal phosphate group between ATP and AMP. Plays an important role in cellular energy homeostasis and in adenine nucleotide metabolism. The chain is Adenylate kinase from Brucella abortus (strain S19).